A 67-amino-acid chain; its full sequence is Beta-defensin 14 (67 aa).

Positions 1–22 (MRLHYLLFVFLILFLVPAPGDA) are cleaved as a signal peptide. Intrachain disulfides connect cysteine 33–cysteine 62, cysteine 40–cysteine 55, and cysteine 45–cysteine 63.

Belongs to the beta-defensin family.

It is found in the secreted. Has antibacterial activity. This is Beta-defensin 14 (Defb14) from Mus musculus (Mouse).